The sequence spans 138 residues: Photosystem II extrinsic protein U (138 aa).

Residues 1-28 (MSRVVSALMGLVLMFGCAFFSVQPQAQA) form the signal peptide. Positions 29-42 (LDLSNGFVSAAVLG) are excised as a propeptide.

The protein belongs to the PsbU family. In terms of assembly, PSII is composed of 1 copy each of membrane proteins PsbA, PsbB, PsbC, PsbD, PsbE, PsbF, PsbH, PsbI, PsbJ, PsbK, PsbL, PsbM, PsbT, PsbX, PsbY, PsbZ, Psb30/Ycf12, peripheral proteins PsbO, CyanoQ (PsbQ), PsbU, PsbV and a large number of cofactors. It forms dimeric complexes.

It localises to the cellular thylakoid membrane. Functionally, one of the extrinsic, lumenal subunits of photosystem II (PSII). PSII is a light-driven water plastoquinone oxidoreductase, using light energy to abstract electrons from H(2)O, generating a proton gradient subsequently used for ATP formation. The extrinsic proteins stabilize the structure of photosystem II oxygen-evolving complex (OEC), the ion environment of oxygen evolution and protect the OEC against heat-induced inactivation. In Picosynechococcus sp. (strain ATCC 27264 / PCC 7002 / PR-6) (Agmenellum quadruplicatum), this protein is Photosystem II extrinsic protein U.